The following is a 142-amino-acid chain: Transcription antitermination protein NusB (142 aa).

This sequence belongs to the NusB family.

In terms of biological role, involved in transcription antitermination. Required for transcription of ribosomal RNA (rRNA) genes. Binds specifically to the boxA antiterminator sequence of the ribosomal RNA (rrn) operons. This Anaeromyxobacter dehalogenans (strain 2CP-1 / ATCC BAA-258) protein is Transcription antitermination protein NusB.